The chain runs to 154 residues: Superoxide dismutase [Cu-Zn] (154 aa).

3 residues coordinate Cu cation: histidine 47, histidine 49, and histidine 64. The cysteines at positions 58 and 147 are disulfide-linked. Zn(2+) is bound by residues histidine 64, histidine 72, histidine 81, and aspartate 84. Histidine 121 lines the Cu cation pocket. Residue arginine 144 coordinates substrate.

This sequence belongs to the Cu-Zn superoxide dismutase family. As to quaternary structure, homodimer. Cu cation serves as cofactor. The cofactor is Zn(2+).

The protein resides in the cytoplasm. The enzyme catalyses 2 superoxide + 2 H(+) = H2O2 + O2. Its function is as follows. Destroys radicals which are normally produced within the cells and which are toxic to biological systems. In Eremothecium gossypii (strain ATCC 10895 / CBS 109.51 / FGSC 9923 / NRRL Y-1056) (Yeast), this protein is Superoxide dismutase [Cu-Zn] (SOD1).